The following is a 725-amino-acid chain: Phosphatase and actin regulator 4A (725 aa).

The span at 1 to 12 shows a compositional bias: polar residues; it reads MGQGASTQTLNP. Residues 1 to 597 form a disordered region; it reads MGQGASTQTL…SSTWNNKEQW (597 aa). Residues 55-64 are compositionally biased toward basic residues; sequence KPWKWRKKKT. Basic and acidic residues-rich tracts occupy residues 65–100, 124–147, and 155–164; these read SDKF…KDIP, GDRK…GERK, and KRNDGTERMT. One copy of the RPEL 1 repeat lies at 75 to 100; that stretch reads LVLERKMSVRKPREELIERGLLKDIP. Positions 166–177 are enriched in polar residues; that stretch reads MIQSFQKMSLMQ. Low complexity predominate over residues 212 to 221; it reads VIAAPSSAEP. A compositionally biased stretch (pro residues) spans 222–235; it reads APVPPPPIAKPPPR. Low complexity-rich tracts occupy residues 265-276 and 292-313; these read PAHTTPATVSTH and PAHV…LLKQ. Residues 359 to 368 are compositionally biased toward polar residues; the sequence is TPVTKRNSGD. Residues 374–384 are compositionally biased toward pro residues; sequence PEPPPPAPTSV. Residues 385-401 are compositionally biased toward low complexity; sequence PIPAAAPISAPPSTQSD. Residues 402–417 show a composition bias toward pro residues; sequence PPSPTTEPPSQPPPLP. Over residues 497–510 the composition is skewed to basic and acidic residues; it reads QKPELEPRSRRGLV. Composition is skewed to acidic residues over residues 522 to 536 and 545 to 554; these read AGSE…ESDS and DNEEDDDEED. The segment covering 567–585 has biased composition (basic and acidic residues); that stretch reads KDTLALKLERQQEKEKSQE. RPEL repeat units lie at residues 606 to 631 and 644 to 669; these read TALT…LAKN and RRLT…RFHE.

Belongs to the phosphatase and actin regulator family. As to quaternary structure, binds ppp1ca and actin.

It localises to the cytoplasm. The protein resides in the cell projection. It is found in the lamellipodium. In terms of biological role, regulator of protein phosphatase 1 (PP1) required for neural tube and optic fissure closure, and enteric neural crest cell (ENCCs) migration during development. Acts as an activator of PP1. During neural tube closure, localizes to the ventral neural tube and activates PP1, leading to down-regulate cell proliferation within cranial neural tissue and the neural retina. Also acts as a regulator of migration of enteric neural crest cells (ENCCs) by activating PP1, leading to repression of the integrin signaling through the rho/rock pathway. This is Phosphatase and actin regulator 4A (phactr4a) from Danio rerio (Zebrafish).